The sequence spans 274 residues: ATP synthase subunit a (274 aa).

The next 5 helical transmembrane spans lie at 43–63 (TLNI…LLVF), 103–123 (VIAP…MMDL), 149–169 (DVSI…FYSI), 223–243 (LIFI…LSVP), and 245–265 (AIFH…LTIV).

This sequence belongs to the ATPase A chain family. In terms of assembly, F-type ATPases have 2 components, CF(1) - the catalytic core - and CF(0) - the membrane proton channel. CF(1) has five subunits: alpha(3), beta(3), gamma(1), delta(1), epsilon(1). CF(0) has three main subunits: a(1), b(2) and c(9-12). The alpha and beta chains form an alternating ring which encloses part of the gamma chain. CF(1) is attached to CF(0) by a central stalk formed by the gamma and epsilon chains, while a peripheral stalk is formed by the delta and b chains.

The protein resides in the cell inner membrane. Functionally, key component of the proton channel; it plays a direct role in the translocation of protons across the membrane. This Yersinia pestis bv. Antiqua (strain Angola) protein is ATP synthase subunit a.